The chain runs to 385 residues: Outer membrane protein P2 (385 aa).

An N-terminal signal peptide occupies residues 1-20 (MKKTLAALIVGAFAASAANA).

The protein belongs to the Gram-negative porin family. Homotrimer.

Its subcellular location is the cell outer membrane. Functionally, forms pores that allow passive diffusion of small molecules across the outer membrane. This is Outer membrane protein P2 (ompP2) from Haemophilus influenzae.